We begin with the raw amino-acid sequence, 644 residues long: 3D-(3,5/4)-trihydroxycyclohexane-1,2-dione hydrolase (644 aa).

A thiamine diphosphate-binding site is contributed by E65. A thiamine pyrophosphate binding region spans residues 442 to 522 (SLPGDLQRMW…INVLLFDNSG (81 aa)). Residues D493 and N520 each contribute to the Mg(2+) site.

It belongs to the TPP enzyme family. Mg(2+) serves as cofactor. Thiamine diphosphate is required as a cofactor.

The catalysed reaction is 3D-3,5/4-trihydroxycyclohexane-1,2-dione + H2O = 5-deoxy-D-glucuronate + H(+). Its pathway is polyol metabolism; myo-inositol degradation into acetyl-CoA; acetyl-CoA from myo-inositol: step 3/7. Its function is as follows. Involved in the cleavage of the C1-C2 bond of 3D-(3,5/4)-trihydroxycyclohexane-1,2-dione (THcHDO) to yield 5-deoxy-glucuronate (5DG). This chain is 3D-(3,5/4)-trihydroxycyclohexane-1,2-dione hydrolase, found in Bacillus cereus (strain AH820).